A 318-amino-acid chain; its full sequence is tRNA methyltransferase 10 homolog B (318 aa).

Residues 1–10 (MDCKSEESAQ) show a composition bias toward basic and acidic residues. The interval 1-105 (MDCKSEESAQ…DPGNGTCPQH (105 aa)) is disordered. A compositionally biased stretch (polar residues) spans 52 to 63 (SPANSAVWSSKN). The span at 64–83 (MQRKQRHWERIVSSKKSKRK) shows a compositional bias: basic residues. The stretch at 72–93 (ERIVSSKKSKRKQERERRKAKR) forms a coiled coil. Over residues 84–96 (QERERRKAKRAED) the composition is skewed to basic and acidic residues. The 198-residue stretch at 114 to 311 (TKEKLLEAKH…KGVSPGKGYV (198 aa)) folds into the SAM-dependent MTase TRM10-type domain.

Belongs to the class IV-like SAM-binding methyltransferase superfamily. TRM10 family.

It catalyses the reaction guanosine(9) in tRNA + S-adenosyl-L-methionine = N(1)-methylguanosine(9) in tRNA + S-adenosyl-L-homocysteine + H(+). S-adenosyl-L-methionine-dependent guanine N(1)-methyltransferase that catalyzes the formation of N(1)-methylguanine at position 9 (m1G9) in tRNAs. Probably not able to catalyze formation of N(1)-methyladenine at position 9 (m1A9) in tRNAs. In Mus musculus (Mouse), this protein is tRNA methyltransferase 10 homolog B (Trmt10b).